The following is a 346-amino-acid chain: 3-keto-steroid reductase ERG27 (346 aa).

3 residues coordinate NADP(+): L19, T42, and K48. Active-site proton donor residues include S182 and Y205. Y205, K209, and S241 together coordinate NADP(+). K209 serves as the catalytic Lowers pKa of active site Tyr. The chain crosses the membrane as a helical span at residues 242-262 (FSFFQYLNVFTYYGMLFLFYL). N-linked (GlcNAc...) asparagine glycosylation occurs at N272.

Belongs to the short-chain dehydrogenases/reductases (SDR) family. ERG27 subfamily. Heterotetramer of ERG25, ERG26, ERG27 and ERG28. ERG28 acts as a scaffold to tether ERG27 and other 4,4-demethylation-related enzymes, forming a demethylation enzyme complex, in the endoplasmic reticulum. Interacts with ERG25 and ERG28. Also interacts with ERG7, but only in lipid particles.

The protein resides in the endoplasmic reticulum membrane. It is found in the lipid droplet. The catalysed reaction is 3-dehydro-4alpha-methylzymosterol + NADPH + H(+) = 4alpha-methylzymosterol + NADP(+). The protein operates within steroid biosynthesis; zymosterol biosynthesis; zymosterol from lanosterol: step 5/6. 3-keto-steroid reductase; part of the third module of ergosterol biosynthesis pathway that includes the late steps of the pathway. ERG27 is a catalytic component of the C-4 demethylation complex that catalyzes the reduction of the keto group on the C-3. The third module or late pathway involves the ergosterol synthesis itself through consecutive reactions that mainly occur in the endoplasmic reticulum (ER) membrane. Firstly, the squalene synthase ERG9 catalyzes the condensation of 2 farnesyl pyrophosphate moieties to form squalene, which is the precursor of all steroids. Squalene synthase is crucial for balancing the incorporation of farnesyl diphosphate (FPP) into sterol and nonsterol isoprene synthesis. Secondly, the squalene epoxidase ERG1 catalyzes the stereospecific oxidation of squalene to (S)-2,3-epoxysqualene, which is considered to be a rate-limiting enzyme in steroid biosynthesis. Then, the lanosterol synthase ERG7 catalyzes the cyclization of (S)-2,3 oxidosqualene to lanosterol, a reaction that forms the sterol core. In the next steps, lanosterol is transformed to zymosterol through a complex process involving various demethylation, reduction and desaturation reactions. The lanosterol 14-alpha-demethylase ERG11 (also known as CYP51) catalyzes C14-demethylation of lanosterol to produce 4,4'-dimethyl cholesta-8,14,24-triene-3-beta-ol, which is critical for ergosterol biosynthesis. The C-14 reductase ERG24 reduces the C14=C15 double bond of 4,4-dimethyl-cholesta-8,14,24-trienol to produce 4,4-dimethyl-cholesta-8,24-dienol. 4,4-dimethyl-cholesta-8,24-dienol is substrate of the C-4 demethylation complex ERG25-ERG26-ERG27 in which ERG25 catalyzes the three-step monooxygenation required for the demethylation of 4,4-dimethyl and 4alpha-methylsterols, ERG26 catalyzes the oxidative decarboxylation that results in a reduction of the 3-beta-hydroxy group at the C-3 carbon to an oxo group, and ERG27 is responsible for the reduction of the keto group on the C-3. ERG28 has a role as a scaffold to help anchor ERG25, ERG26 and ERG27 to the endoplasmic reticulum and ERG29 regulates the activity of the iron-containing C4-methylsterol oxidase ERG25. Then, the sterol 24-C-methyltransferase ERG6 catalyzes the methyl transfer from S-adenosyl-methionine to the C-24 of zymosterol to form fecosterol. The C-8 sterol isomerase ERG2 catalyzes the reaction which results in unsaturation at C-7 in the B ring of sterols and thus converts fecosterol to episterol. The sterol-C5-desaturase ERG3 then catalyzes the introduction of a C-5 double bond in the B ring to produce 5-dehydroepisterol. The C-22 sterol desaturase ERG5 further converts 5-dehydroepisterol into ergosta-5,7,22,24(28)-tetraen-3beta-ol by forming the C-22(23) double bond in the sterol side chain. Finally, ergosta-5,7,22,24(28)-tetraen-3beta-ol is substrate of the C-24(28) sterol reductase ERG4 to produce ergosterol. Functionally, facilitates the association of ERG7 with lipid particles preventing its digestion in the endoplasmic reticulum and the lipid particles. The protein is 3-keto-steroid reductase ERG27 of Candida albicans (strain SC5314 / ATCC MYA-2876) (Yeast).